Consider the following 540-residue polypeptide: Sensory neuron membrane protein 1 (540 aa).

Over Met-1 to Pro-105 the chain is Cytoplasmic. A helical transmembrane segment spans residues Leu-106–Val-126. Over Gln-127–Asn-436 the chain is Extracellular. 2 N-linked (GlcNAc...) asparagine glycosylation sites follow: Asn-193 and Asn-206. Cystine bridges form between Cys-245/Cys-310, Cys-274/Cys-330, and Cys-312/Cys-319. The N-linked (GlcNAc...) asparagine glycan is linked to Asn-418. A helical transmembrane segment spans residues Thr-437–Met-457. The Cytoplasmic portion of the chain corresponds to His-458–Tyr-540.

The protein belongs to the CD36 family.

The protein resides in the cell membrane. In terms of biological role, plays an olfactory role that is not restricted to pheromone sensitivity. The sequence is that of Sensory neuron membrane protein 1 from Aedes aegypti (Yellowfever mosquito).